Reading from the N-terminus, the 629-residue chain is tRNA uridine 5-carboxymethylaminomethyl modification enzyme MnmG (629 aa).

13-18 provides a ligand contact to FAD; it reads GGGHAG. 273–287 contacts NAD(+); that stretch reads GPRYCPSIEDKITRF.

This sequence belongs to the MnmG family. Homodimer. Heterotetramer of two MnmE and two MnmG subunits. Requires FAD as cofactor.

Its subcellular location is the cytoplasm. NAD-binding protein involved in the addition of a carboxymethylaminomethyl (cmnm) group at the wobble position (U34) of certain tRNAs, forming tRNA-cmnm(5)s(2)U34. The chain is tRNA uridine 5-carboxymethylaminomethyl modification enzyme MnmG from Aeromonas salmonicida (strain A449).